Here is a 1008-residue protein sequence, read N- to C-terminus: Retinoblastoma-related protein (1008 aa).

Positions 375 to 394 are disordered; that stretch reads KRKVDSMTSPTKTITSPLSP. Over residues 380-392 the composition is skewed to polar residues; the sequence is SMTSPTKTITSPL. A domain A region spans residues 404–605; that stretch reads TPVSTAMTTA…EKGSSMYNSL (202 aa). Residues 404–853 are pocket; it reads TPVSTAMTTA…NEVFIPSVKP (450 aa). The tract at residues 606 to 722 is spacer; that stretch reads TIARPNLSNE…HPTRGETCGE (117 aa). The segment at 723–853 is domain B; it reads TAVNLFFSKI…NEVFIPSVKP (131 aa). Disordered stretches follow at residues 865–899 and 988–1008; these read KNPN…SLPD and LQNG…LKTE.

It belongs to the retinoblastoma protein (RB) family.

Its subcellular location is the nucleus. Functionally, regulator of biological processes that recruits a histone deacetylase to control gene transcription. May play a role in the entry into mitosis, negatively regulating the cell proliferation. Formation of stable complexes with geminiviridae replication-associated proteins may create a cellular environment which favors viral DNA replication. The polypeptide is Retinoblastoma-related protein (RBR) (Pilosella officinarum (Mouse-ear hawkweed)).